A 242-amino-acid chain; its full sequence is Orotidine 5'-phosphate decarboxylase (242 aa).

Residues Asp-16, Lys-37, 64 to 73 (DLKFHDIPNT), Thr-128, Arg-190, Gln-199, Gly-219, and Arg-220 contribute to the substrate site. Catalysis depends on Lys-66, which acts as the Proton donor.

This sequence belongs to the OMP decarboxylase family. Type 1 subfamily. As to quaternary structure, homodimer.

It carries out the reaction orotidine 5'-phosphate + H(+) = UMP + CO2. It functions in the pathway pyrimidine metabolism; UMP biosynthesis via de novo pathway; UMP from orotate: step 2/2. Catalyzes the decarboxylation of orotidine 5'-monophosphate (OMP) to uridine 5'-monophosphate (UMP). This Prochlorococcus marinus (strain AS9601) protein is Orotidine 5'-phosphate decarboxylase.